Here is a 23-residue protein sequence, read N- to C-terminus: Alpha-conotoxin-like RgIB (23 aa).

2 cysteine pairs are disulfide-bonded: Cys-5–Cys-11 and Cys-6–Cys-19. The interval 7–9 (KNP) is lacks the Ser-Xaa-Pro motif that is crucial for potent interaction with nAChR.

Expressed by venom duct.

Its subcellular location is the secreted. Functionally, alpha-conotoxins act on postsynaptic membranes, they bind to the nicotinic acetylcholine receptors (nAChR) and thus inhibit them. Is a specific blocker of the alpha-3-beta-4/CHRNA3-CHRNB4 image nAChR and may also block alpha-3-beta-4-alpha-5 (CHRNA3-CHRNB4-CHRNA5) channels. Has possibly a distinct nAChR binding mode from other alpha-conotoxins, due to a different three residue motif (lacks the Ser-Xaa-Pro motif). In vivo, causes hyperactivity and behavioral disorders in mice following intracranial injection. This is Alpha-conotoxin-like RgIB from Conus regius (Crown cone).